We begin with the raw amino-acid sequence, 271 residues long: Phthiotriol/phenolphthiotriol dimycocerosates methyltransferase 1 (271 aa).

It belongs to the methyltransferase superfamily. Phthiotriol/phenolphthiotriol dimycocerosates methyltransferase family.

Its function is as follows. Catalyzes the methylation of the lipid moiety of the intermediate compounds phthiotriol and glycosylated phenolphthiotriol dimycoserosates to form phthiocerol dimycocerosates (DIM A) and glycosylated phenolphthiocerol dimycocerosates (PGL). In Mycobacterium ulcerans (strain Agy99), this protein is Phthiotriol/phenolphthiotriol dimycocerosates methyltransferase 1.